The following is a 187-amino-acid chain: NADPH-dependent 3-demethoxyubiquinone 3-hydroxylase, mitochondrial (187 aa).

Residues 1-8 constitute a mitochondrion transit peptide; the sequence is MFRVITRG. K21 serves as a coordination point for NADH. A run of 2 repeats spans residues 28 to 99 and 100 to 187. Positions 28–187 are 2 X approximate tandem repeats; the sequence is AGELGADRIY…KGAIAIAEKI (160 aa). Residues E30, E60, H63, E112, E148, and H151 each contribute to the Fe cation site. K186 provides a ligand contact to NADH.

It belongs to the COQ7 family. In terms of assembly, component of a multi-subunit COQ enzyme complex. Fe cation serves as cofactor.

The protein resides in the mitochondrion inner membrane. Its subcellular location is the mitochondrion. It is found in the nucleus. It catalyses the reaction a 5-methoxy-2-methyl-3-(all-trans-polyprenyl)benzoquinone + NADH + O2 = a 3-demethylubiquinone + NAD(+) + H2O. It participates in cofactor biosynthesis; ubiquinone biosynthesis. Its function is as follows. Catalyzes the hydroxylation of the 5-methoxy-2-methyl-3-(all-trans-polyprenyl)benzoquinone at the C6 position and participates in the biosynthesis of ubiquinone. Catalyzes the reaction through a substrate-mediated reduction pathway, whereby NADH shuttles electrons to 5-methoxy-2-methyl-3-(all-trans-decaprenyl)benzoquinone, which then transfers the electrons to the two Fe(3+) centers. The binding of 5-methoxy-2-methyl-3-(all-trans-polyprenyl)benzoquinone (DMQn) mediates reduction of the diiron center by nicotinamide adenine dinucleotide (NADH) and initiates oxygen activation for subsequent DMQ hydroxylation. Also has a structural role in the COQ enzyme complex, stabilizing other COQ polypeptides. Involved in lifespan determination in a ubiquinone-independent manner. Plays a role in modulating mitochondrial stress responses, acting in the nucleus, perhaps via regulating gene expression, independent of its characterized mitochondrial function in ubiquinone biosynthesis. Plays a role in modulating polyribosome formation. This chain is NADPH-dependent 3-demethoxyubiquinone 3-hydroxylase, mitochondrial, found in Caenorhabditis elegans.